Here is a 511-residue protein sequence, read N- to C-terminus: GATOR complex protein NPRL3 (511 aa).

The disordered stretch occupies residues 37 to 58 (KPATKAPSKDPQPSSSNPGQCV).

The protein belongs to the NPR3 family. As to quaternary structure, probably part of the GATOR complex.

Its subcellular location is the lysosome membrane. In terms of biological role, as a component of the GATOR complex may function in the amino acid-sensing branch of the TORC1 signaling pathway. This Caenorhabditis elegans protein is GATOR complex protein NPRL3 (nprl-3).